We begin with the raw amino-acid sequence, 318 residues long: Deacetoxycephalosporin C hydroxylase (318 aa).

One can recognise a Fe2OG dioxygenase domain in the interval 158–271; the sequence is DADPVLRLRY…RTSSVFFLRP (114 aa).

This sequence belongs to the iron/ascorbate-dependent oxidoreductase family. In terms of assembly, monomer. Fe cation is required as a cofactor.

The catalysed reaction is deacetoxycephalosporin C + 2-oxoglutarate + O2 = deacetylcephalosporin C + succinate + CO2. The protein operates within antibiotic biosynthesis; cephalosporin C biosynthesis. Hydroxylation of desacetoxicephalosporin C in 3'position to form deacetylcephalosporin C. In Streptomyces clavuligerus, this protein is Deacetoxycephalosporin C hydroxylase (cefF).